The chain runs to 130 residues: Putative transposase for insertion sequence element IS6501 (130 aa).

Belongs to the transposase 11 family.

In terms of biological role, involved in the transposition of the insertion sequence. This chain is Putative transposase for insertion sequence element IS6501, found in Brucella ovis (strain ATCC 25840 / 63/290 / NCTC 10512).